Here is a 1086-residue protein sequence, read N- to C-terminus: Rh5-interacting protein (1086 aa).

Residues 1–19 (MFRIFFTLLIIILIKKTSA) form the signal peptide. N-linked (GlcNAc...) asparagine glycosylation is found at asparagine 103, asparagine 144, asparagine 228, asparagine 303, asparagine 334, asparagine 480, asparagine 498, asparagine 506, asparagine 526, and asparagine 646. EGF-like domains lie at 287–321 (RCTQ…NNCE) and 325–362 (LCTV…NKCY). 7 EGF-like domains span residues 636 to 675 (SCSN…KLCE), 679 to 715 (DCES…GKCV), 719 to 753 (KCDL…GVCI), 818 to 854 (YCKD…GECI), 858 to 897 (SCLI…GKCV), 901 to 938 (KCVH…GVCL), and 942 to 979 (PCLK…DSCV). 2 N-linked (GlcNAc...) asparagine glycosylation sites follow: asparagine 964 and asparagine 1021.

As to quaternary structure, component of the PfRH5 adhesion complex composed of 1 copy of CyRPA, RH5 and RIPR; the complex is formed during merozoite invasion of host erythrocytes specifically at the interface between the parasite and host membranes. Within the complex, interacts with CyRPA. CyRPA recruitment of RIPR to RH5-P113-BSG leads to the formation of the PfRH5 adhesion complex which probably in turn releases RH5 from P113 while maintaining the interaction of the PfRH5 adhesion complex with BSG. Post-translationally, proteolytically cleaved into two chains of 125kDa and 65kDa which remain associated. The cleavage occurs at the schizont stage prior to the release of merozoites. In terms of processing, contains disulfide bonds.

The protein resides in the secreted. It localises to the cytoplasmic vesicle. It is found in the secretory vesicle. The protein localises to the microneme lumen. Its subcellular location is the cell membrane. The protein resides in the host cell membrane. In terms of biological role, essential for the invasion of host erythrocytes by blood stage merozoites. As part of the PfRH5 adhesion complex, facilitates the interaction of RH5 and human BSG required for the Ca(2+) release into the erythrocyte. The polypeptide is Rh5-interacting protein (RIPR) (Plasmodium falciparum (isolate 3D7)).